A 128-amino-acid chain; its full sequence is Claw keratin (128 aa).

A run of 2 repeats spans residues 83–91 and 92–100. Residues 83-104 are 3 X 9 AA tandem repeats, Gly-rich; it reads GGYGGLGGYGGYGGLGGYGGYG. A 3; approximate repeat occupies 101–109; sequence GGYGGFGSC.

It belongs to the avian keratin family. In terms of tissue distribution, abundantly expressed in the claw and at a low level in feather tissue.

The polypeptide is Claw keratin (CKER1) (Gallus gallus (Chicken)).